We begin with the raw amino-acid sequence, 3460 residues long: Reelin (3460 aa).

Positions 1–25 (MERSGWARQTFLLALLLGATLRARA) are cleaved as a signal peptide. The 165-residue stretch at 26 to 190 (AAGYYPRFSP…GAPTDVTVHP (165 aa)) folds into the Reelin domain. Cysteine 40 and cysteine 126 are oxidised to a cystine. A glycan (N-linked (GlcNAc...) asparagine) is linked at asparagine 140. Cysteine 154 and cysteine 178 are disulfide-bonded. N-linked (GlcNAc...) asparagine glycosylation is found at asparagine 257, asparagine 289, and asparagine 305. A disulfide bridge links cysteine 539 with cysteine 580. The BNR 1 repeat unit spans residues 592-603 (EFSTNHGRSWSL). Cysteine 608 and cysteine 613 form a disulfide bridge. A glycan (N-linked (GlcNAc...) asparagine) is linked at asparagine 628. The 32-residue stretch at 670–701 (IGPSCLKFCSGRGQCTRHGCKCDPGFSGPACE) folds into the EGF-like 1 domain. 2 disulfide bridges follow: cysteine 674–cysteine 684 and cysteine 691–cysteine 700. The BNR 2 repeat unit spans residues 798-809 (HYSYDNGITWKL). Cysteine 894 and cysteine 936 are disulfide-bonded. One copy of the BNR 3 repeat lies at 951-962 (EYSTNHGLTWHL). 3 disulfides stabilise this stretch: cysteine 967–cysteine 974, cysteine 1033–cysteine 1043, and cysteine 1050–cysteine 1059. In terms of domain architecture, EGF-like 2 spans 1029-1060 (IGQQCPNMCSGHGSCDHGICRCDQGYQGTECH). The BNR 4 repeat unit spans residues 1156-1167 (QYSNNGGIQWHL). Asparagine 1266 carries an N-linked (GlcNAc...) asparagine glycan. An intrachain disulfide couples cysteine 1270 to cysteine 1309. The BNR 5 repeat unit spans residues 1322-1333 (QYSHDAGMSWFL). Cysteine 1338 and cysteine 1347 form a disulfide bridge. One can recognise an EGF-like 3 domain in the interval 1408–1441 (ISEPCPSYCSGHGDCISGVCFCDLGYTAAQGTCV). A BNR 6 repeat occupies 1534–1545 (QYSNDNGILWHL). Asparagine 1599 carries an N-linked (GlcNAc...) asparagine glycan. Cysteines 1632 and 1672 form a disulfide. The stretch at 1685 to 1696 (QYSLNNGKDWHL) is one BNR 7 repeat. Residues cysteine 1701 and cysteine 1708 are joined by a disulfide bond. Residue asparagine 1749 is glycosylated (N-linked (GlcNAc...) asparagine). The EGF-like 4 domain occupies 1764–1795 (LASGCPWMCSGRGICDAGRCVCDRGFGGPYCV). One copy of the BNR 8 repeat lies at 1883 to 1894 (QFSISGGITWHL). Asparagine 1920 is a glycosylation site (N-linked (GlcNAc...) asparagine). One copy of the BNR 9 repeat lies at 2042 to 2053 (EFSRDFGATWHL). Zn(2+) contacts are provided by histidine 2060 and histidine 2073. The 33-residue stretch at 2128-2160 (IGPQCEEMCNGQGSCINGTKCICDPGYSGPTCK) folds into the EGF-like 5 domain. 3 disulfide bridges follow: cysteine 2132/cysteine 2142, cysteine 2136/cysteine 2148, and cysteine 2150/cysteine 2159. Asparagine 2144 is a glycosylation site (N-linked (GlcNAc...) asparagine). Glutamate 2178 contacts Zn(2+). Cysteine 2194 and cysteine 2234 are joined by a disulfide. The stretch at 2249-2260 (QYSLNGGLSWSL) is one BNR 10 repeat. Glutamate 2263 serves as a coordination point for Zn(2+). N-linked (GlcNAc...) asparagine glycosylation is found at asparagine 2268 and asparagine 2316. 3 cysteine pairs are disulfide-bonded: cysteine 2347–cysteine 2386, cysteine 2392–cysteine 2558, and cysteine 2543–cysteine 2583. Positions 2396, 2398, and 2459 each coordinate Zn(2+). One copy of the BNR 11 repeat lies at 2398–2409 (EYSVDLGLSWHP). The EGF-like 6 domain maps to 2477–2508 (IGDGCIDMCSGHGRCIQGNCVCDEQWGGLYCD). Asparagine 2568 carries an N-linked (GlcNAc...) asparagine glycan. BNR repeat units follow at residues 2597-2608 (EYSVNGGITWNL) and 2777-2788 (QYSTDFGVSWNY). 5 cysteine pairs are disulfide-bonded: cysteine 2793/cysteine 2800, cysteine 2856/cysteine 2866, cysteine 2860/cysteine 2871, cysteine 2873/cysteine 2882, and cysteine 2918/cysteine 2965. An EGF-like 7 domain is found at 2852–2883 (LGPGCLDNCRGHGDCLREQCICDPGYSGPNCY). Asparagine 2961 is a glycosylation site (N-linked (GlcNAc...) asparagine). Residues 2978 to 2989 (DYSTDGGITWTL) form a BNR 14 repeat. 2 N-linked (GlcNAc...) asparagine glycosylation sites follow: asparagine 3015 and asparagine 3072. The BNR 15 repeat unit spans residues 3142–3154 (EYTKDARSDSWQL). Cysteines 3159 and 3169 form a disulfide. An N-linked (GlcNAc...) asparagine glycan is attached at asparagine 3184. In terms of domain architecture, EGF-like 8 spans 3227-3259 (IGEACPKLCSGHGYCTTGAICICDESFQGDDCS). Intrachain disulfides connect cysteine 3231/cysteine 3241, cysteine 3235/cysteine 3247, cysteine 3249/cysteine 3258, and cysteine 3295/cysteine 3345. A BNR 16 repeat occupies 3362-3373 (QYSVNNGITWHV). N-linked (GlcNAc...) asparagine glycosylation is found at asparagine 3411 and asparagine 3438.

It belongs to the reelin family. As to quaternary structure, oligomer of disulfide-linked homodimers. Post-translationally, N-glycosylated and to a lesser extent also O-glycosylated. As to expression, abundantly produced during brain ontogenesis by the Cajal-Retzius cells and other pioneer neurons located in the telencephalic marginal zone and by granule cells of the external granular layer of the cerebellum. In adult brain, preferentially expressed in GABAergic interneurons of prefrontal cortices, temporal cortex, hippocampus and glutamatergic granule cells of cerebellum. Expression is reduced to about 50% in patients with schizophrenia. Also expressed in fetal and adult liver.

It localises to the secreted. It is found in the extracellular space. The protein resides in the extracellular matrix. Functionally, extracellular matrix serine protease secreted by pioneer neurons that plays a role in layering of neurons in the cerebral cortex and cerebellum by coordinating cell positioning during neurodevelopment. Regulates microtubule function in neurons and neuronal migration. Binding to the extracellular domains of lipoprotein receptors VLDLR and LRP8/APOER2 induces tyrosine phosphorylation of DAB1 and modulation of TAU phosphorylation. Affects migration of sympathetic preganglionic neurons in the spinal cord, where it seems to act as a barrier to neuronal migration. Enzymatic activity is important for the modulation of cell adhesion. The polypeptide is Reelin (RELN) (Homo sapiens (Human)).